We begin with the raw amino-acid sequence, 130 residues long: Small ribosomal subunit protein uS8 (130 aa).

The protein belongs to the universal ribosomal protein uS8 family. Part of the 30S ribosomal subunit. Contacts proteins S5 and S12.

Functionally, one of the primary rRNA binding proteins, it binds directly to 16S rRNA central domain where it helps coordinate assembly of the platform of the 30S subunit. This chain is Small ribosomal subunit protein uS8, found in Klebsiella pneumoniae (strain 342).